Reading from the N-terminus, the 33-residue chain is Photosystem II reaction center protein Psb30 (33 aa).

Residues 5–25 (VVAQLTVLALIVVSGPLVIGL) form a helical membrane-spanning segment.

The protein belongs to the Psb30/Ycf12 family. As to quaternary structure, PSII is composed of 1 copy each of membrane proteins PsbA, PsbB, PsbC, PsbD, PsbE, PsbF, PsbH, PsbI, PsbJ, PsbK, PsbL, PsbM, PsbT, PsbX, PsbY, PsbZ, Psb30/Ycf12, peripheral proteins of the oxygen-evolving complex and a large number of cofactors. It forms dimeric complexes.

Its subcellular location is the plastid. It is found in the chloroplast thylakoid membrane. Functionally, a core subunit of photosystem II (PSII), probably helps stabilize the reaction center. In Zygnema circumcarinatum (Green alga), this protein is Photosystem II reaction center protein Psb30.